We begin with the raw amino-acid sequence, 290 residues long: Acetyl-coenzyme A carboxylase carboxyl transferase subunit beta (290 aa).

The CoA carboxyltransferase N-terminal domain maps to 27–290; it reads LWVKCPSCES…LQKQPADAVA (264 aa). Zn(2+) contacts are provided by C31, C34, C50, and C53. The C4-type zinc-finger motif lies at 31–53; the sequence is CPSCESTLYRTDVEANLHVCPKC.

This sequence belongs to the AccD/PCCB family. Acetyl-CoA carboxylase is a heterohexamer composed of biotin carboxyl carrier protein (AccB), biotin carboxylase (AccC) and two subunits each of ACCase subunit alpha (AccA) and ACCase subunit beta (AccD). It depends on Zn(2+) as a cofactor.

The protein localises to the cytoplasm. The catalysed reaction is N(6)-carboxybiotinyl-L-lysyl-[protein] + acetyl-CoA = N(6)-biotinyl-L-lysyl-[protein] + malonyl-CoA. Its pathway is lipid metabolism; malonyl-CoA biosynthesis; malonyl-CoA from acetyl-CoA: step 1/1. Component of the acetyl coenzyme A carboxylase (ACC) complex. Biotin carboxylase (BC) catalyzes the carboxylation of biotin on its carrier protein (BCCP) and then the CO(2) group is transferred by the transcarboxylase to acetyl-CoA to form malonyl-CoA. The sequence is that of Acetyl-coenzyme A carboxylase carboxyl transferase subunit beta from Cupriavidus taiwanensis (strain DSM 17343 / BCRC 17206 / CCUG 44338 / CIP 107171 / LMG 19424 / R1) (Ralstonia taiwanensis (strain LMG 19424)).